A 249-amino-acid chain; its full sequence is MADS-box transcription factor 7 (249 aa).

The MADS-box domain occupies 1 to 61; it reads MGRGRVELKR…GKLYEFCSTQ (61 aa). The 91-residue stretch at 90-180 folds into the K-box domain; it reads LKASRNEYLK…RRKLEESNHV (91 aa).

As to quaternary structure, may interact with the K-box of MADS6. May interact with MADS13 and MADS18. As to expression, expressed in lodicules, stamens and carpels.

It is found in the nucleus. In terms of biological role, probable transcription factor. May be involved in the control of flowering time. In Oryza sativa subsp. japonica (Rice), this protein is MADS-box transcription factor 7 (MADS7).